The primary structure comprises 709 residues: Elongation factor G (709 aa).

The tr-type G domain maps to 8 to 297; sequence ANTRNIGIMA…AVIDYLPSPL (290 aa). GTP contacts are provided by residues 17–24, 81–85, and 135–138; these read AHVDAGKT, DTPGH, and NKMD.

It belongs to the TRAFAC class translation factor GTPase superfamily. Classic translation factor GTPase family. EF-G/EF-2 subfamily.

It is found in the cytoplasm. Catalyzes the GTP-dependent ribosomal translocation step during translation elongation. During this step, the ribosome changes from the pre-translocational (PRE) to the post-translocational (POST) state as the newly formed A-site-bound peptidyl-tRNA and P-site-bound deacylated tRNA move to the P and E sites, respectively. Catalyzes the coordinated movement of the two tRNA molecules, the mRNA and conformational changes in the ribosome. This is Elongation factor G from Lactococcus lactis subsp. lactis (strain IL1403) (Streptococcus lactis).